Consider the following 216-residue polypeptide: Probable succinyl-CoA:3-ketoacid coenzyme A transferase subunit B (216 aa).

The active site involves glutamate 47.

This sequence belongs to the 3-oxoacid CoA-transferase subunit B family. In terms of assembly, heterodimer of a subunit A and a subunit B.

The enzyme catalyses a 3-oxo acid + succinyl-CoA = a 3-oxoacyl-CoA + succinate. The polypeptide is Probable succinyl-CoA:3-ketoacid coenzyme A transferase subunit B (scoB) (Bacillus subtilis (strain 168)).